We begin with the raw amino-acid sequence, 360 residues long: Histidinol-phosphate aminotransferase (360 aa).

Residue Lys-222 is modified to N6-(pyridoxal phosphate)lysine.

Belongs to the class-II pyridoxal-phosphate-dependent aminotransferase family. Histidinol-phosphate aminotransferase subfamily. The cofactor is pyridoxal 5'-phosphate.

The enzyme catalyses L-histidinol phosphate + 2-oxoglutarate = 3-(imidazol-4-yl)-2-oxopropyl phosphate + L-glutamate. It participates in amino-acid biosynthesis; L-histidine biosynthesis; L-histidine from 5-phospho-alpha-D-ribose 1-diphosphate: step 7/9. The polypeptide is Histidinol-phosphate aminotransferase (Haloarcula marismortui (strain ATCC 43049 / DSM 3752 / JCM 8966 / VKM B-1809) (Halobacterium marismortui)).